We begin with the raw amino-acid sequence, 230 residues long: SPbeta prophage-derived putative HNH endonuclease YoqL (230 aa).

The HNH domain occupies 136 to 188 (CSYCGLKIEDHKILFKGTYIQSDFHKEHVDHKGANDISNCIPACKSCNSSKHD).

Belongs to the HNH nuclease family.

This is SPbeta prophage-derived putative HNH endonuclease YoqL (yoqL) from Bacillus subtilis (strain 168).